The chain runs to 214 residues: Proteasome subunit beta (214 aa).

Positions 1–11 (MLDTSQEIMKG) are cleaved as a propeptide — removed in mature form; by autocatalysis. Catalysis depends on T12, which acts as the Nucleophile.

It belongs to the peptidase T1B family. The 20S proteasome core is composed of 14 alpha and 14 beta subunits that assemble into four stacked heptameric rings, resulting in a barrel-shaped structure. The two inner rings, each composed of seven catalytic beta subunits, are sandwiched by two outer rings, each composed of seven alpha subunits. The catalytic chamber with the active sites is on the inside of the barrel. Has a gated structure, the ends of the cylinder being occluded by the N-termini of the alpha-subunits. Is capped at one or both ends by the proteasome regulatory ATPase, PAN.

The protein resides in the cytoplasm. It catalyses the reaction Cleavage of peptide bonds with very broad specificity.. Its activity is regulated as follows. The formation of the proteasomal ATPase PAN-20S proteasome complex, via the docking of the C-termini of PAN into the intersubunit pockets in the alpha-rings, triggers opening of the gate for substrate entry. Interconversion between the open-gate and close-gate conformations leads to a dynamic regulation of the 20S proteasome proteolysis activity. In terms of biological role, component of the proteasome core, a large protease complex with broad specificity involved in protein degradation. This chain is Proteasome subunit beta, found in Methanoculleus marisnigri (strain ATCC 35101 / DSM 1498 / JR1).